We begin with the raw amino-acid sequence, 340 residues long: Protein SSUH2 homolog (340 aa).

Positions 1-11 (MDRDPSEEDSM) are enriched in acidic residues. The segment at 1–20 (MDRDPSEEDSMADLSFEAES) is disordered.

In terms of tissue distribution, widely expressed, with highest levels in the liver, intestine, tongue and underjaw.

It localises to the cytoplasm. The protein localises to the nucleus. Plays a role in odontogenesis. The sequence is that of Protein SSUH2 homolog from Mus musculus (Mouse).